The following is a 132-amino-acid chain: Large ribosomal subunit protein uL14 (132 aa).

The protein belongs to the universal ribosomal protein uL14 family. In terms of assembly, the L3/L14/L24e cluster may contact the 16S rRNA in 2 intersubunit bridges. Part of the 50S ribosomal subunit. Forms a cluster with proteins L3 and L24e.

Functionally, forms part of two intersubunit bridges in the 70S ribosome. Binds to 23S rRNA. This chain is Large ribosomal subunit protein uL14, found in Haloarcula marismortui (strain ATCC 43049 / DSM 3752 / JCM 8966 / VKM B-1809) (Halobacterium marismortui).